Consider the following 355-residue polypeptide: Peptide chain release factor 1 (355 aa).

Q233 carries the N5-methylglutamine modification. A compositionally biased stretch (basic and acidic residues) spans 281-293; sequence RRNKEQERADSRR. The disordered stretch occupies residues 281–308; that stretch reads RRNKEQERADSRRGQIGSGDRSERIRTY.

Belongs to the prokaryotic/mitochondrial release factor family. Post-translationally, methylated by PrmC. Methylation increases the termination efficiency of RF1.

It localises to the cytoplasm. Functionally, peptide chain release factor 1 directs the termination of translation in response to the peptide chain termination codons UAG and UAA. The sequence is that of Peptide chain release factor 1 from Rickettsia akari (strain Hartford).